Here is a 270-residue protein sequence, read N- to C-terminus: MFSELDLLDFATFDGGATTEAAFASPANQTYDLSSSVPSSVSNMGTVSPQELLLHEPYLSAPSSTALTALTSPSLFDGSPDFDTFDISPNFGHSDLENPDTWFSLFPDATPLPQAQAQVQTQPQTQTQTEQQTQPLPELVQSVQPTVQPTVEQTVHSVEASPATPSEDLEVLSPGSGHQRRKSSVSPPSGRHSSVAGVGSRRRDKPLPPIIVEDPSDVVAMKRARNTLAARKSRERKAQRLEELEAKIEELIAERDRWKNLALAHGASTE.

Disordered regions lie at residues glutamine 114–proline 135 and glutamine 153–glutamate 213. Residues serine 184–valine 195 show a composition bias toward low complexity. In terms of domain architecture, bZIP spans serine 216–glutamate 270. A basic motif region spans residues lysine 222–arginine 240. Positions leucine 241 to isoleucine 248 are leucine-zipper.

This sequence belongs to the bZIP family. GCN4 subfamily. In terms of assembly, binds DNA as a dimer.

Its subcellular location is the nucleus. Its function is as follows. In N.crassa grown under amino acid starvation conditions, this protein is required for increasing the transcription of the genes coding for many amino acid biosynthetic pathways enzymes. This transcription factor binds and recognize the DNA sequence: 5'-TGACTC-3'. This chain is Cross-pathway control protein 1 (cpc-1), found in Neurospora crassa (strain ATCC 24698 / 74-OR23-1A / CBS 708.71 / DSM 1257 / FGSC 987).